The following is a 2776-amino-acid chain: A-kinase anchor protein 13 (2776 aa).

Disordered regions lie at residues 371 to 401, 452 to 518, 547 to 584, 618 to 641, 653 to 689, 760 to 871, 910 to 951, 995 to 1029, 1431 to 1508, 1527 to 1546, and 1565 to 1603; these read KNKD…SCLQ, EPDA…TETT, PAEA…QSSP, TMPG…PAQS, EAGT…ESTM, VSQT…SPTA, ALGQ…IPGL, GAAK…LPSG, LCDT…MDSI, PFRR…AEMN, and RRSF…FGGE. The segment covering 389–401 has biased composition (polar residues); sequence DSGSASHQDSCLQ. Residues 493–515 are important for interaction with PRKAR2A; the sequence is QNNKPQVGEGTKERLENSDSSTT. The segment covering 560-573 has biased composition (basic and acidic residues); it reads PTEKPGMETQERGC. A compositionally biased stretch (polar residues) spans 659-672; it reads AEATHQPSTVTSSG. A compositionally biased stretch (low complexity) spans 773–788; it reads SPPASSFSLASSPESE. A Phosphoserine modification is found at Ser-784. Thr-809 bears the Phosphothreonine mark. Composition is skewed to basic and acidic residues over residues 820–834 and 914–940; these read DGPD…DKVG and DGKD…EDQR. The residue at position 941 (Thr-941) is a Phosphothreonine. The segment covering 1005 to 1020 has biased composition (polar residues); it reads TSLSADSKQKASSTEQ. Residues 1433–1444 are compositionally biased toward low complexity; the sequence is DTTGSSSSTDDT. The span at 1454–1476 shows a compositional bias: polar residues; sequence GSDVSLPQTSKLNRSRNHQSANG. Phosphoserine occurs at positions 1455, 1473, 1507, 1532, and 1569. The interval 1552–1678 is important for interaction with MAP2K3; that stretch reads RALGHVVRRP…SRPFHSTSAN (127 aa). Over residues 1583–1594 the composition is skewed to low complexity; that stretch reads SSSLEMSSANSS. A phosphoserine mark is found at Ser-1608, Ser-1611, and Ser-1613. An N6-methyllysine modification is found at Lys-1637. Positions 1711-1756 are disordered; sequence TFSYIRNKMSSSKKSKEKEKEKDKIKEKEKDSKEKEKDKKTLNGHT. Residues 1724–1751 show a composition bias toward basic and acidic residues; sequence KSKEKEKEKDKIKEKEKDSKEKEKDKKT. A Phorbol-ester/DAG-type zinc finger spans residues 1754–1801; sequence GHTFSPIPIVGPISCSQCMKPFTNKDAYTCAGCGAFVHKGCRENLASC. Phosphoserine is present on residues Ser-1839, Ser-1858, and Ser-1892. The interaction with ESR1 stretch occupies residues 1882–2776; it reads MSNTWKFLSH…VPAEGEEIFC (895 aa). Thr-1893 is modified (phosphothreonine). 2 positions are modified to phosphoserine: Ser-1895 and Ser-1908. Residues 1957–2154 enclose the DH domain; sequence KRQEVIYELM…KDVIGAVDSK (198 aa). In terms of domain architecture, PH spans 2194 to 2296; it reads KLVRDGSVFL…WIQIIQDTIN (103 aa). Phosphoserine is present on residues Ser-2308 and Ser-2361. A coiled-coil region spans residues 2308–2345; it reads SENEEEKKLLDTKARELKEQLQQKDQQILLLLEEKEMI. Thr-2431 carries the post-translational modification Phosphothreonine. A disordered region spans residues 2436–2471; it reads DCHQMNASKGGEKEEGDDGQDLRRTESDSGLKKGGN. A compositionally biased stretch (basic and acidic residues) spans 2455–2466; that stretch reads QDLRRTESDSGL. Phosphoserine occurs at positions 2527 and 2530. Residues 2532–2646 adopt a coiled-coil conformation; sequence LIEQEKQRSL…ERLSQRQMDQ (115 aa). 2 disordered regions span residues 2549–2605 and 2626–2776; these read ANLQ…EELQ and EREQ…EIFC. Composition is skewed to basic and acidic residues over residues 2558–2605 and 2626–2640; these read HLEE…EELQ and EREQ…ERLS. Composition is skewed to polar residues over residues 2641–2653, 2665–2700, and 2713–2727; these read QRQM…QVSN, LPNS…SISR, and SASQ…SQAP. Ser-2673 and Ser-2692 each carry phosphoserine.

Interacts with the cAMP-dependent protein kinase (PKA) holoenzyme and with the regulatory subunit PRKAR2A. Interacts with RHOA. Also interacts with RHOB and RHOC. Identified in a ternary complex with RHOA and PRKAR2A. Identified in a complex with NR3C1 and RHOA. Interacts with BRAF and KSR1. Identified in a complex with BRAF and KSR1. Component of a signaling complex containing at least AKAP13, PKN1, MAPK14, ZAK and MAP2K3. Within this complex, AKAP13 interacts directly with PKN1, which in turn recruits MAPK14, MAP2K3 and ZAK. Interacts (phosphorylated form) with YWHAB and YWHAZ. Interaction with YWHAB inhibits activation of RHOA, interferes with PKN1 binding and activation of MAP kinases. Interacts with GNA12. Interacts with IKBKB. Interacts with ESR1, THRA, PPARA and NME2. Interacts (via the C-terminal domain after the PH domain) with MEF2C and RXRB. Interacts (via the C-terminal domain after the PH domain) with PRKD1. In terms of tissue distribution, detected in embryonic heart, limb bud, first branchial arch and forebrain (at protein level). Detected in heart. Detected in perichondrium, but not in the bone growth plate.

It localises to the cytoplasm. The protein resides in the cytosol. It is found in the cell cortex. Its subcellular location is the cytoskeleton. The protein localises to the nucleus. It localises to the membrane. Its function is as follows. Scaffold protein that plays an important role in assembling signaling complexes downstream of several types of G protein-coupled receptors. Activates RHOA in response to signaling via G protein-coupled receptors via its function as Rho guanine nucleotide exchange factor. May also activate other Rho family members. Part of a kinase signaling complex that links ADRA1A and ADRA1B adrenergic receptor signaling to the activation of downstream p38 MAP kinases, such as MAPK11 and MAPK14. Part of a signaling complex that links ADRA1B signaling to the activation of RHOA and IKBKB/IKKB, leading to increased NF-kappa-B transcriptional activity. Part of a RHOA-dependent signaling cascade that mediates responses to lysophosphatidic acid (LPA), a signaling molecule that activates G-protein coupled receptors and potentiates transcriptional activation of the glucocorticoid receptor NR3C1. Part of a signaling cascade that stimulates MEF2C-dependent gene expression in response to lysophosphatidic acid (LPA). Part of a signaling pathway that activates MAPK11 and/or MAPK14 and leads to increased transcription activation of the estrogen receptors ESR1 and ESR2. Part of a signaling cascade that links cAMP and EGFR signaling to BRAF signaling and to PKA-mediated phosphorylation of KSR1, leading to the activation of downstream MAP kinases, such as MAPK1 or MAPK3. Functions as a scaffold protein that anchors cAMP-dependent protein kinase (PKA) and PRKD1. This promotes activation of PRKD1, leading to increased phosphorylation of HDAC5 and ultimately cardiomyocyte hypertrophy. Has no guanine nucleotide exchange activity on CDC42, Ras or Rac. Required for normal embryonic heart development, and in particular for normal sarcomere formation in the developing cardiomyocytes. Plays a role in cardiomyocyte growth and cardiac hypertrophy in response to activation of the beta-adrenergic receptor by phenylephrine or isoproterenol. Required for normal adaptive cardiac hypertrophy in response to pressure overload. Plays a role in osteogenesis. The chain is A-kinase anchor protein 13 from Mus musculus (Mouse).